A 62-amino-acid polypeptide reads, in one-letter code: Conotoxin Sr5.7 (62 aa).

Positions 1–22 are cleaved as a signal peptide; the sequence is MRCLPVFVILLLLIASAPSVDA. A propeptide spanning residues 23–44 is cleaved from the precursor; that stretch reads QLKTKDDVPLASFHDNAKGTQH.

It belongs to the conotoxin T superfamily. Post-translationally, contains 2 disulfide bonds that can be either 'C1-C3, C2-C4' or 'C1-C4, C2-C3', since these disulfide connectivities have been observed for conotoxins with cysteine framework V (for examples, see AC P0DQQ7 and AC P81755). Expressed by the venom duct.

The protein localises to the secreted. The chain is Conotoxin Sr5.7 from Conus spurius (Alphabet cone).